Reading from the N-terminus, the 437-residue chain is UDP-glucose 6-dehydrogenase (437 aa).

NAD(+) is bound by residues Val11, Asp30, Lys35, Thr86, Thr122, and Glu155. Substrate contacts are provided by residues 151–155 (EFLRE), Lys209, Asn213, 254–258 (FLHAG), and Gly262. The active-site Nucleophile is the Cys265. Residue Lys268 coordinates NAD(+). Residue Lys326 coordinates substrate. Residue Arg333 participates in NAD(+) binding.

Belongs to the UDP-glucose/GDP-mannose dehydrogenase family.

The enzyme catalyses UDP-alpha-D-glucose + 2 NAD(+) + H2O = UDP-alpha-D-glucuronate + 2 NADH + 3 H(+). It participates in nucleotide-sugar biosynthesis; UDP-alpha-D-glucuronate biosynthesis; UDP-alpha-D-glucuronate from UDP-alpha-D-glucose: step 1/1. Its pathway is capsule biogenesis; capsule polysaccharide biosynthesis. This is UDP-glucose 6-dehydrogenase from Rhizobium meliloti (strain 1021) (Ensifer meliloti).